We begin with the raw amino-acid sequence, 147 residues long: MRSLLVLVLCFLPLAALGKVYGRCELAAAMKRHGLDKYQGYSLGNWVCAAKFESNFNTQATNRNTDGSTDYGILQINSRWWCNDGRTPGSRNLCNIPCSALLSSDITASVNCAKKIVSDVHGMNAWVAWRNRCKGTDVNAWIRGCRL.

An N-terminal signal peptide occupies residues 1–18 (MRSLLVLVLCFLPLAALG). A C-type lysozyme domain is found at 19–147 (KVYGRCELAA…VNAWIRGCRL (129 aa)). Cystine bridges form between C24/C145, C48/C133, C82/C98, and C94/C112. Catalysis depends on residues E53 and D70.

Belongs to the glycosyl hydrolase 22 family. Monomer.

The protein localises to the secreted. The catalysed reaction is Hydrolysis of (1-&gt;4)-beta-linkages between N-acetylmuramic acid and N-acetyl-D-glucosamine residues in a peptidoglycan and between N-acetyl-D-glucosamine residues in chitodextrins.. In terms of biological role, lysozymes have primarily a bacteriolytic function; those in tissues and body fluids are associated with the monocyte-macrophage system and enhance the activity of immunoagents. The polypeptide is Lysozyme C (LYZ) (Coturnix japonica (Japanese quail)).